A 148-amino-acid polypeptide reads, in one-letter code: UPF0756 membrane protein NGK_2061 (148 aa).

4 consecutive transmembrane segments (helical) span residues 10-32 (LVTL…ATIL), 50-70 (HGLN…LVSG), 85-105 (MISA…GVPL), and 116-136 (LLIG…GPLI).

This sequence belongs to the UPF0756 family.

The protein resides in the cell membrane. This chain is UPF0756 membrane protein NGK_2061, found in Neisseria gonorrhoeae (strain NCCP11945).